Consider the following 313-residue polypeptide: Adhesin MafA 1/2 (313 aa).

Residues 1–14 form the signal peptide; that stretch reads MKTLLLLIPLVLTA. Cysteine 15 carries the N-palmitoyl cysteine lipid modification. Cysteine 15 carries S-diacylglycerol cysteine lipidation. The span at 282–298 shows a compositional bias: polar residues; the sequence is GDTTAQNRPDFKQNNGK. Residues 282–313 are disordered; that stretch reads GDTTAQNRPDFKQNNGKNPDVGNEVIRRRKGG.

It belongs to the MafA family.

The protein resides in the cell outer membrane. This chain is Adhesin MafA 1/2 (mafA1), found in Neisseria meningitidis serogroup C (strain 053442).